Consider the following 115-residue polypeptide: Tyrosine-protein phosphatase 22 (115 aa).

The Tyrosine-protein phosphatase domain maps to 1-115; the sequence is WLMIVEQKCR…ETGGDAPMVV (115 aa). Aspartate 83 is a substrate binding site.

It belongs to the protein-tyrosine phosphatase family.

It catalyses the reaction O-phospho-L-tyrosyl-[protein] + H2O = L-tyrosyl-[protein] + phosphate. The polypeptide is Tyrosine-protein phosphatase 22 (STY-22) (Styela plicata (Wrinkled sea squirt)).